Consider the following 161-residue polypeptide: 3-isopropylmalate dehydratase small subunit (161 aa).

Belongs to the LeuD family. LeuD type 2 subfamily. In terms of assembly, heterodimer of LeuC and LeuD.

The enzyme catalyses (2R,3S)-3-isopropylmalate = (2S)-2-isopropylmalate. The protein operates within amino-acid biosynthesis; L-leucine biosynthesis; L-leucine from 3-methyl-2-oxobutanoate: step 2/4. In terms of biological role, catalyzes the isomerization between 2-isopropylmalate and 3-isopropylmalate, via the formation of 2-isopropylmaleate. This chain is 3-isopropylmalate dehydratase small subunit, found in Metallosphaera sedula (strain ATCC 51363 / DSM 5348 / JCM 9185 / NBRC 15509 / TH2).